Reading from the N-terminus, the 156-residue chain is UPF0460 protein in nifX 3'region (156 aa).

It belongs to the UPF0460 family.

The protein is UPF0460 protein in nifX 3'region of Rhodobacter capsulatus (Rhodopseudomonas capsulata).